Reading from the N-terminus, the 181-residue chain is uncharacterized protein (181 aa).

A disordered region spans residues 162-181; the sequence is QARGPAGTRTPQRRCSSHEA.

This is an uncharacterized protein from Homo sapiens (Human).